The following is a 317-amino-acid chain: 4-diphosphocytidyl-2-C-methyl-D-erythritol kinase (317 aa).

The active site involves lysine 11. 99-109 provides a ligand contact to ATP; it reads PVAAGLAGGST. Residue aspartate 141 is part of the active site.

This sequence belongs to the GHMP kinase family. IspE subfamily.

The enzyme catalyses 4-CDP-2-C-methyl-D-erythritol + ATP = 4-CDP-2-C-methyl-D-erythritol 2-phosphate + ADP + H(+). It participates in isoprenoid biosynthesis; isopentenyl diphosphate biosynthesis via DXP pathway; isopentenyl diphosphate from 1-deoxy-D-xylulose 5-phosphate: step 3/6. Its function is as follows. Catalyzes the phosphorylation of the position 2 hydroxy group of 4-diphosphocytidyl-2C-methyl-D-erythritol. This is 4-diphosphocytidyl-2-C-methyl-D-erythritol kinase from Nostoc sp. (strain PCC 7120 / SAG 25.82 / UTEX 2576).